Here is an 883-residue protein sequence, read N- to C-terminus: Phosphoenolpyruvate carboxylase (883 aa).

Catalysis depends on residues histidine 138 and lysine 546.

This sequence belongs to the PEPCase type 1 family. Requires Mg(2+) as cofactor.

The catalysed reaction is oxaloacetate + phosphate = phosphoenolpyruvate + hydrogencarbonate. Functionally, forms oxaloacetate, a four-carbon dicarboxylic acid source for the tricarboxylic acid cycle. The protein is Phosphoenolpyruvate carboxylase of Escherichia coli (strain 55989 / EAEC).